The primary structure comprises 1696 residues: uncharacterized protein (1696 aa).

4 disordered regions span residues 1-113, 151-194, 258-284, and 299-376; these read MDSS…HPQY, DSWT…SRSR, DVTRSSASREGARETRNEGRTLYPEKK, and GRRE…KQRG. Positions 21-42 are enriched in pro residues; it reads LHPPSAPLPPPPPLPPPPPPRQ. Over residues 52–61 the composition is skewed to polar residues; the sequence is GRSTQSNGQR. Residues 96–113 show a composition bias toward low complexity; that stretch reads QQQHQPLSLQQQQQHPQY. Over residues 170 to 183 the composition is skewed to polar residues; that stretch reads RNYQYDYSRNSSGV. Composition is skewed to basic and acidic residues over residues 267–284, 325–340, and 358–376; these read EGARETRNEGRTLYPEKK, ETPRSYKNSRENEWSR, and RGKEHLGHSDRGLVEKQRG. A Phosphoserine modification is found at serine 378. Disordered regions lie at residues 419-483, 688-724, 1063-1090, 1184-1211, 1319-1340, 1361-1429, and 1658-1696; these read RALL…GGKL, SDIGGIEDDNKRIDKNVDSLSPENDSSRGRPMGLDSP, IKHKEDNCTESVEVETHEEKAKLPGGTS, TSKSIEKIESSGGTSEHRTPETDIVAGS, GEAVSSDGQVSGTEIPGGSGVR, VVSV…SDAS, and SESRCNQSISLPDDALDTRSAANMVSERPSSSAFSDSGM. Composition is skewed to basic and acidic residues over residues 421 to 436 and 695 to 704; these read LLSDKNEKVSVTERNG and DDNKRIDKNV. Serine 708 bears the Phosphoserine mark. Residues 1184 to 1204 show a composition bias toward basic and acidic residues; it reads TSKSIEKIESSGGTSEHRTPE. The span at 1361-1370 shows a compositional bias: basic and acidic residues; the sequence is VVSVPHRDPQ. 3 stretches are compositionally biased toward polar residues: residues 1389 to 1398, 1658 to 1667, and 1677 to 1696; these read NYSTQKSYPS, SESRCNQSIS, and SAANMVSERPSSSAFSDSGM.

This is an uncharacterized protein from Arabidopsis thaliana (Mouse-ear cress).